Reading from the N-terminus, the 330-residue chain is DNA-directed RNA polymerase subunit alpha (330 aa).

Residues M1–K232 form an alpha N-terminal domain (alpha-NTD) region. Positions E248 to D330 are alpha C-terminal domain (alpha-CTD).

The protein belongs to the RNA polymerase alpha chain family. In terms of assembly, homodimer. The RNAP catalytic core consists of 2 alpha, 1 beta, 1 beta' and 1 omega subunit. When a sigma factor is associated with the core the holoenzyme is formed, which can initiate transcription.

The catalysed reaction is RNA(n) + a ribonucleoside 5'-triphosphate = RNA(n+1) + diphosphate. Functionally, DNA-dependent RNA polymerase catalyzes the transcription of DNA into RNA using the four ribonucleoside triphosphates as substrates. The sequence is that of DNA-directed RNA polymerase subunit alpha from Porphyromonas gingivalis (strain ATCC BAA-308 / W83).